Reading from the N-terminus, the 242-residue chain is Small ribosomal subunit protein uS2 (242 aa).

This sequence belongs to the universal ribosomal protein uS2 family.

The chain is Small ribosomal subunit protein uS2 from Shewanella denitrificans (strain OS217 / ATCC BAA-1090 / DSM 15013).